Consider the following 616-residue polypeptide: Proline--tRNA ligase (616 aa).

Belongs to the class-II aminoacyl-tRNA synthetase family. ProS type 1 subfamily. In terms of assembly, homodimer.

It localises to the cytoplasm. It catalyses the reaction tRNA(Pro) + L-proline + ATP = L-prolyl-tRNA(Pro) + AMP + diphosphate. Its function is as follows. Catalyzes the attachment of proline to tRNA(Pro) in a two-step reaction: proline is first activated by ATP to form Pro-AMP and then transferred to the acceptor end of tRNA(Pro). As ProRS can inadvertently accommodate and process non-cognate amino acids such as alanine and cysteine, to avoid such errors it has two additional distinct editing activities against alanine. One activity is designated as 'pretransfer' editing and involves the tRNA(Pro)-independent hydrolysis of activated Ala-AMP. The other activity is designated 'posttransfer' editing and involves deacylation of mischarged Ala-tRNA(Pro). The misacylated Cys-tRNA(Pro) is not edited by ProRS. The polypeptide is Proline--tRNA ligase (Streptococcus gordonii (strain Challis / ATCC 35105 / BCRC 15272 / CH1 / DL1 / V288)).